Here is a 426-residue protein sequence, read N- to C-terminus: Glutamate-1-semialdehyde 2,1-aminomutase (426 aa).

Position 265 is an N6-(pyridoxal phosphate)lysine (Lys-265).

This sequence belongs to the class-III pyridoxal-phosphate-dependent aminotransferase family. HemL subfamily. Homodimer. Requires pyridoxal 5'-phosphate as cofactor.

The protein resides in the cytoplasm. It catalyses the reaction (S)-4-amino-5-oxopentanoate = 5-aminolevulinate. The protein operates within porphyrin-containing compound metabolism; protoporphyrin-IX biosynthesis; 5-aminolevulinate from L-glutamyl-tRNA(Glu): step 2/2. The polypeptide is Glutamate-1-semialdehyde 2,1-aminomutase (Aliarcobacter butzleri (strain RM4018) (Arcobacter butzleri)).